The chain runs to 580 residues: Isochorismate synthase, chloroplastic (580 aa).

The transit peptide at 1–91 directs the protein to the chloroplast; the sequence is MASITGHCVA…LAMERLSSAV (91 aa).

This sequence belongs to the isochorismate synthase family. Mg(2+) serves as cofactor.

It is found in the plastid. It localises to the chloroplast. The enzyme catalyses chorismate = isochorismate. Not inhibited by Tyr, Phe or Trp. Involved in the synthesis of o-succinylbenzoic acid, 2,3-dihydroxybenzoic acid and salicylic acid (SA). The polypeptide is Isochorismate synthase, chloroplastic (Catharanthus roseus (Madagascar periwinkle)).